The chain runs to 460 residues: Glycine--tRNA ligase (460 aa).

2 residues coordinate substrate: arginine 99 and glutamate 162. ATP is bound by residues 194-196 (RNE), 204-209 (FRTREF), 281-282 (EL), and 325-328 (GVGR). 209–213 (FEQME) contacts substrate. Residue 321 to 325 (EPAAG) participates in substrate binding.

Belongs to the class-II aminoacyl-tRNA synthetase family. In terms of assembly, homodimer.

The protein resides in the cytoplasm. The enzyme catalyses tRNA(Gly) + glycine + ATP = glycyl-tRNA(Gly) + AMP + diphosphate. Its function is as follows. Catalyzes the attachment of glycine to tRNA(Gly). The protein is Glycine--tRNA ligase of Streptomyces coelicolor (strain ATCC BAA-471 / A3(2) / M145).